The following is a 223-amino-acid chain: Protein-disulfide oxidoreductase DsbI (223 aa).

A helical transmembrane segment spans residues 26–46; it reads LLWLLMAVAMGALIILAHSFF. Cysteines 55 and 58 form a disulfide. Transmembrane regions (helical) follow at residues 59–78 and 82–102; these read VYIRYAMFVMVIGGLVAAIN and IILKLIGCVMAFYGSILGLKF. Cys127 and Cys153 are disulfide-bonded. A helical transmembrane segment spans residues 198 to 218; that stretch reads CMLAFGMCLVLLVIMSGAWAL.

Belongs to the DsbB family. DsbI subfamily. As to quaternary structure, interacts with DsbL.

The protein resides in the cell inner membrane. In terms of biological role, required for disulfide bond formation in some proteins. Part of a redox system composed of DsbI and DsbL that mediates formation of an essential disulfide bond in AssT. The chain is Protein-disulfide oxidoreductase DsbI from Escherichia coli O1:K1 / APEC.